Reading from the N-terminus, the 345-residue chain is Mycothiol acetyltransferase (345 aa).

N-acetyltransferase domains lie at 6–149 and 164–345; these read DTYE…KAME and FEVL…RGRL. Position 39 (Glu39) interacts with 1D-myo-inositol 2-(L-cysteinylamino)-2-deoxy-alpha-D-glucopyranoside. 76–78 contacts acetyl-CoA; the sequence is LAV. 1D-myo-inositol 2-(L-cysteinylamino)-2-deoxy-alpha-D-glucopyranoside-binding residues include Glu198, Lys261, and Glu277. Acetyl-CoA contacts are provided by residues 281–283 and 288–294; these read VCL and RGRGLGQ. Tyr315 contacts 1D-myo-inositol 2-(L-cysteinylamino)-2-deoxy-alpha-D-glucopyranoside.

It belongs to the acetyltransferase family. MshD subfamily. Monomer.

The enzyme catalyses 1D-myo-inositol 2-(L-cysteinylamino)-2-deoxy-alpha-D-glucopyranoside + acetyl-CoA = mycothiol + CoA + H(+). Functionally, catalyzes the transfer of acetyl from acetyl-CoA to desacetylmycothiol (Cys-GlcN-Ins) to form mycothiol. The chain is Mycothiol acetyltransferase from Corynebacterium jeikeium (strain K411).